We begin with the raw amino-acid sequence, 386 residues long: tRNA-specific 2-thiouridylase MnmA (386 aa).

Residues 9-16 and M35 each bind ATP; that span reads GMSGGVDS. The tract at residues 95-97 is interaction with target base in tRNA; it reads NPD. The active-site Nucleophile is the C100. A disulfide bond links C100 and C196. An ATP-binding site is contributed by G124. The interval 146-148 is interaction with tRNA; sequence KDQ. Catalysis depends on C196, which acts as the Cysteine persulfide intermediate. The interval 308–309 is interaction with tRNA; the sequence is RY.

The protein belongs to the MnmA/TRMU family.

Its subcellular location is the cytoplasm. It catalyses the reaction S-sulfanyl-L-cysteinyl-[protein] + uridine(34) in tRNA + AH2 + ATP = 2-thiouridine(34) in tRNA + L-cysteinyl-[protein] + A + AMP + diphosphate + H(+). Catalyzes the 2-thiolation of uridine at the wobble position (U34) of tRNA, leading to the formation of s(2)U34. This Burkholderia thailandensis (strain ATCC 700388 / DSM 13276 / CCUG 48851 / CIP 106301 / E264) protein is tRNA-specific 2-thiouridylase MnmA.